The following is a 560-amino-acid chain: 2-succinyl-5-enolpyruvyl-6-hydroxy-3-cyclohexene-1-carboxylate synthase (560 aa).

The protein belongs to the TPP enzyme family. MenD subfamily. In terms of assembly, homodimer. The cofactor is Mg(2+). Requires Mn(2+) as cofactor. Thiamine diphosphate serves as cofactor.

The enzyme catalyses isochorismate + 2-oxoglutarate + H(+) = 5-enolpyruvoyl-6-hydroxy-2-succinyl-cyclohex-3-ene-1-carboxylate + CO2. It functions in the pathway quinol/quinone metabolism; 1,4-dihydroxy-2-naphthoate biosynthesis; 1,4-dihydroxy-2-naphthoate from chorismate: step 2/7. The protein operates within quinol/quinone metabolism; menaquinone biosynthesis. Functionally, catalyzes the thiamine diphosphate-dependent decarboxylation of 2-oxoglutarate and the subsequent addition of the resulting succinic semialdehyde-thiamine pyrophosphate anion to isochorismate to yield 2-succinyl-5-enolpyruvyl-6-hydroxy-3-cyclohexene-1-carboxylate (SEPHCHC). This is 2-succinyl-5-enolpyruvyl-6-hydroxy-3-cyclohexene-1-carboxylate synthase from Pectobacterium atrosepticum (strain SCRI 1043 / ATCC BAA-672) (Erwinia carotovora subsp. atroseptica).